The following is a 300-amino-acid chain: Ribosomal protein L11 methyltransferase (300 aa).

Residues Thr-147, Gly-168, Asp-190, and Asn-236 each contribute to the S-adenosyl-L-methionine site.

This sequence belongs to the methyltransferase superfamily. PrmA family.

Its subcellular location is the cytoplasm. The catalysed reaction is L-lysyl-[protein] + 3 S-adenosyl-L-methionine = N(6),N(6),N(6)-trimethyl-L-lysyl-[protein] + 3 S-adenosyl-L-homocysteine + 3 H(+). In terms of biological role, methylates ribosomal protein L11. The polypeptide is Ribosomal protein L11 methyltransferase (Leptospira borgpetersenii serovar Hardjo-bovis (strain JB197)).